The sequence spans 560 residues: Digoxin reductase (560 aa).

The tat-type signal signal peptide spans 1-48; that stretch reads MEYGKCRGIERGMGRRDFLKAATLLGATAAGAGMLAGCAPKSASEAQA.

This sequence belongs to the FAD-dependent oxidoreductase 2 family. In terms of assembly, may form a membrane-associated complex with Cgr1. Requires FAD as cofactor. [4Fe-4S] cluster serves as cofactor. In terms of processing, predicted to be exported by the Tat system. The position of the signal peptide cleavage has not been experimentally proven.

The protein resides in the cell membrane. It catalyses the reaction digoxin + 2 Fe(II)-[cytochrome c] + 3 H(+) = dihydrodigoxin + 2 Fe(III)-[cytochrome c]. The enzyme catalyses digitoxin + 2 Fe(II)-[cytochrome c] + 3 H(+) = dihydrodigitoxin + 2 Fe(III)-[cytochrome c]. The catalysed reaction is digoxigenin + 2 Fe(II)-[cytochrome c] + 3 H(+) = dihydrodigoxigenin + 2 Fe(III)-[cytochrome c]. It carries out the reaction ouabain + 2 Fe(II)-[cytochrome c] + 3 H(+) = dihydroouabain + 2 Fe(III)-[cytochrome c]. It catalyses the reaction ouabagenin + 2 Fe(II)-[cytochrome c] + 3 H(+) = dihydroouabagenin + 2 Fe(III)-[cytochrome c]. In terms of biological role, involved in the inactivation of the cardiac medication and plant natural product digoxin, thus decreasing drug efficacy and toxicity. Catalyzes the reduction of the alpha,beta-unsaturated butyrolactone ring of digoxin to the inactive metabolite dihydrodigoxin. Likely uses the cytochrome Cgr1 as the physiological electron donor, encoded by the adjacent gene in the locus. Only reduces digoxin and other cardenolide toxins, such as digitoxin, digoxigenin, ouabain and ouabagenin. Therefore is a specialized enzyme present in some gut bacteria E.lenta that protects their human host against ingested plant toxins. In Eggerthella lenta (strain ATCC 25559 / DSM 2243 / CCUG 17323 / JCM 9979 / KCTC 3265 / NCTC 11813 / VPI 0255 / 1899 B) (Eubacterium lentum), this protein is Digoxin reductase.